Reading from the N-terminus, the 91-residue chain is Large ribosomal subunit protein uL23c (91 aa).

This sequence belongs to the universal ribosomal protein uL23 family. Part of the 50S ribosomal subunit.

The protein resides in the plastid. It is found in the chloroplast. Its function is as follows. Binds to 23S rRNA. This is Large ribosomal subunit protein uL23c (rpl23) from Huperzia lucidula (Shining clubmoss).